Here is a 245-residue protein sequence, read N- to C-terminus: UDP-2,3-diacylglucosamine hydrolase (245 aa).

Mn(2+) contacts are provided by Asp-8, His-10, Asp-41, Asn-80, and His-115. 80–81 (NR) is a substrate binding site. Asp-123, Ser-161, Lys-165, Lys-168, and His-196 together coordinate substrate. Mn(2+)-binding residues include His-196 and His-198.

This sequence belongs to the LpxH family. Mn(2+) serves as cofactor.

The protein localises to the cell inner membrane. The enzyme catalyses UDP-2-N,3-O-bis[(3R)-3-hydroxytetradecanoyl]-alpha-D-glucosamine + H2O = 2-N,3-O-bis[(3R)-3-hydroxytetradecanoyl]-alpha-D-glucosaminyl 1-phosphate + UMP + 2 H(+). It participates in glycolipid biosynthesis; lipid IV(A) biosynthesis; lipid IV(A) from (3R)-3-hydroxytetradecanoyl-[acyl-carrier-protein] and UDP-N-acetyl-alpha-D-glucosamine: step 4/6. Hydrolyzes the pyrophosphate bond of UDP-2,3-diacylglucosamine to yield 2,3-diacylglucosamine 1-phosphate (lipid X) and UMP by catalyzing the attack of water at the alpha-P atom. Involved in the biosynthesis of lipid A, a phosphorylated glycolipid that anchors the lipopolysaccharide to the outer membrane of the cell. In Psychromonas ingrahamii (strain DSM 17664 / CCUG 51855 / 37), this protein is UDP-2,3-diacylglucosamine hydrolase.